The chain runs to 90 residues: Acylphosphatase (90 aa).

In terms of domain architecture, Acylphosphatase-like spans 5–90; it reads SYLFNVKGKV…WQELTDFKMY (86 aa). Residues Arg-20 and Asn-38 contribute to the active site.

The protein belongs to the acylphosphatase family.

It carries out the reaction an acyl phosphate + H2O = a carboxylate + phosphate + H(+). This is Acylphosphatase (acyP) from Aliivibrio fischeri (strain ATCC 700601 / ES114) (Vibrio fischeri).